The sequence spans 388 residues: UPF0229 protein BH1031 (388 aa).

Positions H80–E117 are disordered. Residues Q103–D113 are compositionally biased toward gly residues.

Belongs to the UPF0229 family.

The chain is UPF0229 protein BH1031 from Halalkalibacterium halodurans (strain ATCC BAA-125 / DSM 18197 / FERM 7344 / JCM 9153 / C-125) (Bacillus halodurans).